A 365-amino-acid chain; its full sequence is Phosphatidylcholine:ceramide cholinephosphotransferase 2 (365 aa).

The segment covering Met-1–Glu-14 has biased composition (basic and acidic residues). The tract at residues Met-1–Gly-52 is disordered. The span at Asn-15–Tyr-24 shows a compositional bias: polar residues. 4 helical membrane-spanning segments follow: residues Gly-80–Val-100, Phe-128–Phe-148, Phe-159–Leu-179, and Leu-206–Phe-226. The active site involves His-229. A helical membrane pass occupies residues Phe-248–Val-268. Residues His-272 and Asp-276 contribute to the active site. A helical membrane pass occupies residues Ile-275 to Ala-295. Residues Asn-296–Thr-365 are Cytoplasmic-facing. S-palmitoyl cysteine attachment occurs at residues Cys-331, Cys-332, Cys-343, and Cys-348.

It belongs to the sphingomyelin synthase family. In terms of processing, palmitoylated on Cys-331, Cys-332, Cys-343 and Cys-348; which plays an important role in plasma membrane localization. Brain, heart, kidney, liver, muscle and stomach. Also expressed in a number of cell lines such as carcinoma HeLa cells, hepatoma Hep-G2 cells, and colon carcinoma Caco-2 cells.

The protein resides in the cell membrane. It is found in the golgi apparatus membrane. It carries out the reaction an N-acylsphing-4-enine + a 1,2-diacyl-sn-glycero-3-phosphocholine = a sphingomyelin + a 1,2-diacyl-sn-glycerol. The enzyme catalyses an N-acylsphinganine + a 1,2-diacyl-sn-glycero-3-phosphocholine = an N-acylsphinganine-1-phosphocholine + a 1,2-diacyl-sn-glycerol. It catalyses the reaction an N-acyl-(4R)-4-hydroxysphinganine + a 1,2-diacyl-sn-glycero-3-phosphocholine = an N-acyl-(4R)-4-hydroxysphinganine-phosphocholine + a 1,2-diacyl-sn-glycerol. The catalysed reaction is an N-acylsphinganine + a 1,2-diacyl-sn-glycero-3-phosphoethanolamine = an N-acylsphinganine-1-phosphoethanolamine + a 1,2-diacyl-sn-glycerol. It carries out the reaction an N-acyl-(4R)-4-hydroxysphinganine + a 1,2-diacyl-sn-glycero-3-phosphoethanolamine = an N-acyl-(4R)-4-hydroxysphinganine-1-phosphoethanolamine + a 1,2-diacyl-sn-glycerol. The enzyme catalyses an N-acylsphing-4-enine + a 1,2-diacyl-sn-glycero-3-phosphoethanolamine = an N-acylsphing-4-enine 1-phosphoethanolamine + a 1,2-diacyl-sn-glycerol. It catalyses the reaction 1,2-dihexadecanoyl-sn-glycero-3-phosphocholine + an N-acylsphing-4-enine = 1,2-dihexadecanoyl-sn-glycerol + a sphingomyelin. The catalysed reaction is 1-(9Z-octadecenoyl)-2-acyl-sn-3-glycerol + a sphingomyelin = a 1-(9Z-octadecenoyl)-2-acyl-sn-glycero-3-phosphocholine + an N-acylsphing-4-enine. It carries out the reaction N-hexadecanoylsphinganine + a 1,2-diacyl-sn-glycero-3-phosphocholine = N-hexadecanoyl-sphinganine-1-phosphocholine + a 1,2-diacyl-sn-glycerol. The enzyme catalyses N-hexadecanoyl-(4R)-hydroxysphinganine + a 1,2-diacyl-sn-glycero-3-phosphocholine = N-hexadecanoyl-(4R)-hydroxysphinganine-phosphocholine + a 1,2-diacyl-sn-glycerol. It catalyses the reaction N-hexadecanoylsphinganine + a 1,2-diacyl-sn-glycero-3-phosphoethanolamine = N-hexadecanoyl-sphinganine-1-phosphoethanolamine + a 1,2-diacyl-sn-glycerol. The catalysed reaction is N-hexadecanoyl-(4R)-hydroxysphinganine + a 1,2-diacyl-sn-glycero-3-phosphoethanolamine = N-hexadecanoyl-(4R)-hydroxysphinganine-1-phosphoethanolamine + a 1,2-diacyl-sn-glycerol. It functions in the pathway sphingolipid metabolism. Its activity is regulated as follows. Inhibited by bacterial PC-phospholipase C inhibitor D609. Its function is as follows. Sphingomyelin synthase that primarily contributes to sphingomyelin synthesis and homeostasis at the plasma membrane. Catalyzes the reversible transfer of phosphocholine moiety in sphingomyelin biosynthesis: in the forward reaction transfers phosphocholine head group of phosphatidylcholine (PC) on to ceramide (CER) to form ceramide phosphocholine (sphingomyelin, SM) and diacylglycerol (DAG) as by-product, and in the reverse reaction transfers phosphocholine from SM to DAG to form PC and CER. The direction of the reaction appears to depend on the levels of CER and DAG in the plasma membrane. Does not use free phosphorylcholine or CDP-choline as donors. Can also transfer phosphoethanolamine head group of phosphatidylethanolamine (PE) on to ceramide (CER) to form ceramide phosphoethanolamine (CPE). Regulates receptor-mediated signal transduction via mitogenic DAG and proapoptotic CER, as well as via SM, a structural component of membrane rafts that serve as platforms for signal transduction and protein sorting. To a lesser extent, plays a role in secretory transport via regulation of DAG pool at the Golgi apparatus and its downstream effects on PRKD1. Required for normal bone matrix mineralization. This is Phosphatidylcholine:ceramide cholinephosphotransferase 2 from Homo sapiens (Human).